The primary structure comprises 180 residues: ATP synthase subunit delta (180 aa).

Belongs to the ATPase delta chain family. In terms of assembly, F-type ATPases have 2 components, F(1) - the catalytic core - and F(0) - the membrane proton channel. F(1) has five subunits: alpha(3), beta(3), gamma(1), delta(1), epsilon(1). F(0) has three main subunits: a(1), b(2) and c(10-14). The alpha and beta chains form an alternating ring which encloses part of the gamma chain. F(1) is attached to F(0) by a central stalk formed by the gamma and epsilon chains, while a peripheral stalk is formed by the delta and b chains.

The protein resides in the cell inner membrane. In terms of biological role, f(1)F(0) ATP synthase produces ATP from ADP in the presence of a proton or sodium gradient. F-type ATPases consist of two structural domains, F(1) containing the extramembraneous catalytic core and F(0) containing the membrane proton channel, linked together by a central stalk and a peripheral stalk. During catalysis, ATP synthesis in the catalytic domain of F(1) is coupled via a rotary mechanism of the central stalk subunits to proton translocation. This protein is part of the stalk that links CF(0) to CF(1). It either transmits conformational changes from CF(0) to CF(1) or is implicated in proton conduction. The chain is ATP synthase subunit delta from Citrifermentans bemidjiense (strain ATCC BAA-1014 / DSM 16622 / JCM 12645 / Bem) (Geobacter bemidjiensis).